Consider the following 760-residue polypeptide: Alpha-amylase (760 aa).

The first 34 residues, 1-34, serve as a signal peptide directing secretion; it reads MSKRSKLLKRRMLSLSVICVLIGYGPVFNPVRSQ. Ca(2+)-binding residues include N143, T184, and D192. The active-site Nucleophile is the D222. H226 serves as a coordination point for Ca(2+). The Proton donor role is filled by E262.

Belongs to the glycosyl hydrolase 13 family. In terms of assembly, monomer. Requires Ca(2+) as cofactor.

The catalysed reaction is Endohydrolysis of (1-&gt;4)-alpha-D-glucosidic linkages in polysaccharides containing three or more (1-&gt;4)-alpha-linked D-glucose units.. This Clostridium acetobutylicum (strain ATCC 824 / DSM 792 / JCM 1419 / IAM 19013 / LMG 5710 / NBRC 13948 / NRRL B-527 / VKM B-1787 / 2291 / W) protein is Alpha-amylase (amyA).